The chain runs to 346 residues: Glycerol-1-phosphate dehydrogenase [NAD(P)+] (346 aa).

NAD(+)-binding positions include 93-97 (GSIID) and 115-118 (TTAS). Asp-120 provides a ligand contact to substrate. Residue Ser-124 participates in NAD(+) binding. Asp-167 serves as a coordination point for substrate. Zn(2+)-binding residues include Asp-167 and His-247. Residue His-251 participates in substrate binding. His-263 contributes to the Zn(2+) binding site.

The protein belongs to the glycerol-1-phosphate dehydrogenase family. The cofactor is Zn(2+).

It localises to the cytoplasm. It catalyses the reaction sn-glycerol 1-phosphate + NAD(+) = dihydroxyacetone phosphate + NADH + H(+). It carries out the reaction sn-glycerol 1-phosphate + NADP(+) = dihydroxyacetone phosphate + NADPH + H(+). The protein operates within membrane lipid metabolism; glycerophospholipid metabolism. Its function is as follows. Catalyzes the NAD(P)H-dependent reduction of dihydroxyacetonephosphate (DHAP or glycerone phosphate) to glycerol 1-phosphate (G1P). The G1P thus generated is used as the glycerophosphate backbone of phospholipids in the cellular membranes of Archaea. The polypeptide is Glycerol-1-phosphate dehydrogenase [NAD(P)+] (Pyrococcus horikoshii (strain ATCC 700860 / DSM 12428 / JCM 9974 / NBRC 100139 / OT-3)).